Consider the following 65-residue polypeptide: Ovary maturating parsin (65 aa).

Residues 17 to 28 are compositionally biased toward low complexity; it reads PAAPAVAPAAPA. Positions 17–36 are disordered; sequence PAAPAVAPAAPASWPHQQRR.

Monomer.

Neurohormone that anticipates ovarian maturation. Acts as a true gonadotropin and stimulates vitellogenin biosynthesis. The polypeptide is Ovary maturating parsin (Locusta migratoria (Migratory locust)).